Consider the following 293-residue polypeptide: Pyridoxal 5'-phosphate synthase subunit PdxS (293 aa).

Aspartate 23 serves as a coordination point for D-ribose 5-phosphate. Catalysis depends on lysine 80, which acts as the Schiff-base intermediate with D-ribose 5-phosphate. Glycine 152 serves as a coordination point for D-ribose 5-phosphate. Arginine 164 provides a ligand contact to D-glyceraldehyde 3-phosphate. D-ribose 5-phosphate is bound by residues glycine 213 and 234-235 (GS).

This sequence belongs to the PdxS/SNZ family. As to quaternary structure, in the presence of PdxT, forms a dodecamer of heterodimers.

It carries out the reaction aldehydo-D-ribose 5-phosphate + D-glyceraldehyde 3-phosphate + L-glutamine = pyridoxal 5'-phosphate + L-glutamate + phosphate + 3 H2O + H(+). It participates in cofactor biosynthesis; pyridoxal 5'-phosphate biosynthesis. Functionally, catalyzes the formation of pyridoxal 5'-phosphate from ribose 5-phosphate (RBP), glyceraldehyde 3-phosphate (G3P) and ammonia. The ammonia is provided by the PdxT subunit. Can also use ribulose 5-phosphate and dihydroxyacetone phosphate as substrates, resulting from enzyme-catalyzed isomerization of RBP and G3P, respectively. In Roseiflexus sp. (strain RS-1), this protein is Pyridoxal 5'-phosphate synthase subunit PdxS.